The following is a 410-amino-acid chain: Transcription termination factor, mitochondrial (410 aa).

A mitochondrion-targeting transit peptide spans 1–44; sequence MIRSLLRSFETALKLHAGLNMHPMHCSRRLLFSQYENRASPSRL.

It belongs to the mTERF family.

The protein localises to the mitochondrion. Transcription termination factor. Binds promoter DNA and regulates mitochondrial replication and transcription. Transcription termination activity may be polarized with highest termination activity occurring when its DNA-binding site is positioned in the reverse orientation with respect to the incoming RNA polymerase. Required for normal topology and maintenance of mitochondrial DNA (mtDNA) levels. Regulates mtDNA replication by promoting replication pausing, possibly by acting as a natural barrier to replication fork progression. Its function in replication pausing prevents unregulated replication that may occur for example by collisions between the machineries of DNA replication and transcription during mtDNA synthesis. This ensures the incorporation of RNA transcripts into replication intermediates at the replication fork and allow for proper fork progression. Shares mtDNA binding sites with the mitochondrial termination factor mTerf5 and thereby may antagonize mTerf5 function during replication to regulate pausing. Likely to function downstream of Dref which activates genes involved in mtDNA replication and maintenance. The chain is Transcription termination factor, mitochondrial from Drosophila melanogaster (Fruit fly).